We begin with the raw amino-acid sequence, 775 residues long: BLOC-2 complex member HPS6 (775 aa).

In terms of assembly, component of the biogenesis of lysosome-related organelles complex-2 (or BLOC2) composed of HPS3, HPS5 and HPS6. Interacts with HPS5 and HPS3. Interacts with biogenesis of lysosome-related organelles complex-1 (BLOC1). Interacts with AP-3 complex. Interacts with MNAT1. Interacts with DCTN1 and dynein intermediate chain. Ubiquitous.

The protein localises to the microsome membrane. It localises to the cytoplasm. Its subcellular location is the cytosol. The protein resides in the early endosome membrane. It is found in the lysosome membrane. Functionally, may regulate the synthesis and function of lysosomes and of highly specialized organelles, such as melanosomes and platelet dense granules. Acts as a cargo adapter for the dynein-dynactin motor complex to mediate the transport of lysosomes from the cell periphery to the perinuclear region. Facilitates retrograde lysosomal trafficking by linking the motor complex to lysosomes, and perinuclear positioning of lysosomes is crucial for the delivery of endocytic cargos to lysosomes, for lysosome maturation and functioning. This chain is BLOC-2 complex member HPS6 (HPS6), found in Homo sapiens (Human).